The sequence spans 548 residues: Folylpolyglutamate synthase (548 aa).

Residue 130-133 participates in ATP binding; the sequence is GKGS. The Mg(2+) site is built by serine 157, glutamate 234, and histidine 262. 2 residues coordinate ATP: arginine 382 and aspartate 396.

This sequence belongs to the folylpolyglutamate synthase family. The cofactor is a monovalent cation.

The protein localises to the mitochondrion inner membrane. Its subcellular location is the mitochondrion matrix. It localises to the cytoplasm. The catalysed reaction is (6S)-5,6,7,8-tetrahydrofolyl-(gamma-L-Glu)(n) + L-glutamate + ATP = (6S)-5,6,7,8-tetrahydrofolyl-(gamma-L-Glu)(n+1) + ADP + phosphate + H(+). It participates in cofactor biosynthesis; tetrahydrofolylpolyglutamate biosynthesis. Catalyzes conversion of folates to polyglutamate derivatives allowing concentration of folate compounds in the cell and the intracellular retention of these cofactors, which are important substrates for most of the folate-dependent enzymes that are involved in one-carbon transfer reactions involved in purine, pyrimidine and amino acid synthesis. Required for methionine synthesis and maintenance of intact mitochondrial DNA. Involved in telomere maintenance. The sequence is that of Folylpolyglutamate synthase from Saccharomyces cerevisiae (strain AWRI1631) (Baker's yeast).